The sequence spans 62 residues: Bowman-Birk type proteinase inhibitor B7 (62 aa).

5 cysteine pairs are disulfide-bonded: cysteine 5/cysteine 59, cysteine 6/cysteine 23, cysteine 13/cysteine 21, cysteine 30/cysteine 37, and cysteine 34/cysteine 51.

It belongs to the Bowman-Birk serine protease inhibitor family. In terms of tissue distribution, expressed in bulb (at protein level).

Its function is as follows. Serine protease inhibitor. Inhibits trypsin (Ki = 65 nM) and weakly inhibits chymotrypsin (Ki = 295 nM). Does not inhibit bacterial subtilisin. The chain is Bowman-Birk type proteinase inhibitor B7 from Hyacinthus orientalis (Common hyacinth).